The following is a 390-amino-acid chain: Nucleosome assembly protein 1-like 1 (390 aa).

Basic and acidic residues predominate over residues 1 to 10 (MADIDNKEQS). A disordered region spans residues 1 to 32 (MADIDNKEQSELDQDLEDVEEVEEEETGEETK). Ala2 is modified (N-acetylalanine). A Phosphoserine modification is found at Ser10. Acidic residues predominate over residues 11–28 (ELDQDLEDVEEVEEEETG). Phosphothreonine occurs at positions 62 and 64. Residue Ser69 is modified to Phosphoserine. Lys116 carries the post-translational modification N6-acetyllysine. The NAP1L motif signature appears at 125–150 (YEPTEEECEWKPDEEDEVSEELKEKA). Residues 131–143 (ECEWKPDEEDEVS) are compositionally biased toward acidic residues. A disordered region spans residues 131-163 (ECEWKPDEEDEVSEELKEKAKIEDEKKDEEKED). Residue Ser143 is modified to Phosphoserine. Residues 144–163 (EELKEKAKIEDEKKDEEKED) are compositionally biased toward basic and acidic residues. A Nuclear localization signal motif is present at residues 272 to 278 (IKKKQKH). Residues 345-375 (AIEDDDDDYDEEGEEADEEGEEEGDEENDPD) are compositionally biased toward acidic residues. Positions 345 to 390 (AIEDDDDDYDEEGEEADEEGEEEGDEENDPDYDPKKDQNPAECKQQ) are disordered. 5-glutamyl polyglycine occurs at positions 358 and 359. Positions 376-390 (YDPKKDQNPAECKQQ) are enriched in basic and acidic residues. Cysteine methyl ester is present on Cys387. Cys387 carries the S-farnesyl cysteine lipid modification. Residues 388–390 (KQQ) constitute a propeptide, removed in mature form.

It belongs to the nucleosome assembly protein (NAP) family. As to quaternary structure, homodimer. The dimer binds strongly and sequentially to single and double H2A-H2B heterodimers. Interacts with ERCC6; this interaction increases ERCC6 processivity. Interacts with RAD54. Interacts with SETD1A. Post-translationally, polyglycylated by TTLL10 on glutamate residues, resulting in polyglycine chains on the gamma-carboxyl group. Both polyglutamylation and polyglycylation modifications can coexist on the same protein on adjacent residues, and lowering polyglycylation levels increases polyglutamylation, and reciprocally. In terms of processing, polyglutamylated by TTLL4 on glutamate residues, resulting in polyglutamate chains on the gamma-carboxyl group. Both polyglutamylation and polyglycylation modifications can coexist on the same protein on adjacent residues, and lowering polyglycylation levels increases polyglutamylation, and reciprocally.

The protein resides in the nucleus. It localises to the melanosome. Its subcellular location is the cytoplasm. Histone chaperone that plays a role in the nuclear import of H2A-H2B and nucleosome assembly. Also participates in several important DNA repair mechanisms: greatly enhances ERCC6-mediated chromatin remodeling which is essential for transcription-coupled nucleotide excision DNA repair. Also stimulates homologous recombination (HR) by RAD51 and RAD54 which is essential in mitotic DNA double strand break (DSB) repair. Plays a key role in the regulation of embryonic neurogenesis. Promotes the proliferation of neural progenitors and inhibits neuronal differentiation during cortical development. Regulates neurogenesis via the modulation of RASSF10; regulates RASSF10 expression by promoting SETD1A-mediated H3K4 methylation at the RASSF10 promoter. This chain is Nucleosome assembly protein 1-like 1 (Nap1l1), found in Rattus norvegicus (Rat).